Reading from the N-terminus, the 1223-residue chain is A disintegrin and metalloproteinase with thrombospondin motifs 14 (1223 aa).

An N-terminal signal peptide occupies residues Met-1 to Ala-22. Positions Gly-23–Arg-252 are excised as a propeptide. A glycan (N-linked (GlcNAc...) asparagine) is linked at Asn-109. A Peptidase M12B domain is found at Tyr-259–Pro-460. Cystine bridges form between Cys-336-Cys-382, Cys-376-Cys-455, and Cys-415-Cys-441. His-398 contributes to the Zn(2+) binding site. The active site involves Glu-399. Positions 402 and 408 each coordinate Zn(2+). A Disintegrin domain is found at Phe-461 to Gln-551. N-linked (GlcNAc...) asparagine glycosylation occurs at Asn-475. Intrachain disulfides connect Cys-482-Cys-507, Cys-493-Cys-516, Cys-502-Cys-535, Cys-529-Cys-540, Cys-564-Cys-601, Cys-568-Cys-606, and Cys-579-Cys-591. A TSP type-1 1 domain is found at Asp-552 to Pro-607. The tract at residues Leu-730 to Met-846 is spacer. TSP type-1 domains follow at residues Asp-847 to Ser-907, Gln-908 to Pro-967, and Cys-968 to Gly-1022. A glycan (N-linked (GlcNAc...) asparagine) is linked at Asn-941. Cystine bridges form between Cys-980-Cys-1016, Cys-984-Cys-1021, and Cys-995-Cys-1005. Asn-1027 carries N-linked (GlcNAc...) asparagine glycosylation. A PLAC domain is found at Ser-1059–Ala-1097. The interval Pro-1100–Thr-1223 is disordered. Positions Asn-1101–Gln-1125 are enriched in pro residues. Over residues Pro-1199–His-1211 the composition is skewed to basic and acidic residues.

In terms of processing, the precursor is cleaved by a furin endopeptidase. Glycosylated. Can be O-fucosylated by POFUT2 on a serine or a threonine residue found within the consensus sequence C1-X(2)-(S/T)-C2-G of the TSP type-1 repeat domains where C1 and C2 are the first and second cysteine residue of the repeat, respectively. Fucosylated repeats can then be further glycosylated by the addition of a beta-1,3-glucose residue by the glucosyltransferase, B3GALTL. Fucosylation mediates the efficient secretion of ADAMTS family members. Can also be C-glycosylated with one or two mannose molecules on tryptophan residues within the consensus sequence W-X-X-W of the TPRs, and N-glycosylated. These other glycosylations can also facilitate secretion. In terms of tissue distribution, expressed in retina and at low levels in brain, lung and placenta. High expression in fetal tissues.

It is found in the secreted. It localises to the extracellular space. Its subcellular location is the extracellular matrix. In terms of biological role, has aminoprocollagen type I processing activity in the absence of ADAMTS2. Seems to be synthesized as a latent enzyme that requires activation to display aminoprocollagen peptidase activity. Cleaves lysyl oxidase LOX at a site downstream of its propeptide cleavage site to produce a short LOX form. This chain is A disintegrin and metalloproteinase with thrombospondin motifs 14 (ADAMTS14), found in Homo sapiens (Human).